Consider the following 407-residue polypeptide: 12S rRNA N(4)-cytidine methyltransferase METTL15 (407 aa).

S-adenosyl-L-methionine-binding positions include 100–102 (GGH), D119, F146, D169, and Q176. S358 is subject to Phosphoserine.

The protein belongs to the methyltransferase superfamily. RsmH family.

It is found in the mitochondrion matrix. The catalysed reaction is cytidine(839) in 12S rRNA + S-adenosyl-L-methionine = N(4)-methylcytidine(839) in 12S rRNA + S-adenosyl-L-homocysteine + H(+). N4-methylcytidine (m4C) methyltransferase responsible for the methylation of position C839 in mitochondrial 12S rRNA. Involved in the stabilization of 12S rRNA folding, therefore facilitating the assembly of the mitochondrial small ribosomal subunits. In Homo sapiens (Human), this protein is 12S rRNA N(4)-cytidine methyltransferase METTL15.